A 423-amino-acid chain; its full sequence is 5-hydroxytryptamine receptor 1A (423 aa).

Residues 1–20 (MEGLSPGQGNNTTSSEGPFG) form a disordered region. Residues 1 to 38 (MEGLSPGQGNNTTSSEGPFGTRGNATGISDVTFSYQVI) are Extracellular-facing. Over residues 7–16 (GQGNNTTSSE) the composition is skewed to polar residues. Asparagine 10, asparagine 11, and asparagine 24 each carry an N-linked (GlcNAc...) asparagine glycan. The helical transmembrane segment at 39-59 (TSLLLGTLIFCAVLGNACVVA) threads the bilayer. The Cytoplasmic segment spans residues 60-73 (AIALERSLQNVANY). A helical transmembrane segment spans residues 74 to 98 (LIGSLAVTDLMVSVLVLPMAALYQV). Over 99–107 (LNKWTLGQV) the chain is Extracellular. A helical transmembrane segment spans residues 108–132 (TCDLFIALDVLCCTSSILHLCAIAL). Cysteines 109 and 187 form a disulfide. Positions 116 and 120 each coordinate serotonin. A DRY motif; important for ligand-induced conformation changes motif is present at residues 133–135 (DRY). Over 133–152 (DRYWAITDPIDYVNKRTPRR) the chain is Cytoplasmic. A helical transmembrane segment spans residues 153–174 (AAALISLTWLIGFLISIPPMLG). Residues 175–193 (WRTPEDRSDPDACTISKDH) are Extracellular-facing. The helical transmembrane segment at 194-216 (GYTIYSTFGAFYIPLLLMLVLYG) threads the bilayer. The Cytoplasmic portion of the chain corresponds to 217–346 (RIFRAARFRI…LARERKTVKT (130 aa)). The segment at 235 to 277 (RKGADARSGVSPAPQPRKSVNGEPGGREWRQGPGSKAGGPLCT) is disordered. Residues lysine 345, threonine 346, and glycine 352 each coordinate 1D-myo-inositol 4-phosphate. A helical membrane pass occupies residues 347-370 (LGIIMGTFILCWLPFFIVALVLPF). Over 371 to 378 (CESSCHMP) the chain is Extracellular. A helical transmembrane segment spans residues 379-403 (TLLGAIINWLGYSNSLLNPVIYAYF). Positions 396-400 (NPVIY) match the NPxxY motif; important for ligand-induced conformation changes and signaling motif. 3 residues coordinate 1D-myo-inositol 4-phosphate: phenylalanine 403, asparagine 404, and lysine 405. The Cytoplasmic segment spans residues 404-423 (NKDFQNAFKKIVRCKFCRRR).

It belongs to the G-protein coupled receptor 1 family. 5-hydroxytryptamine receptor subfamily. HTR1A sub-subfamily. As to quaternary structure, heterodimer; heterodimerizes with GPER1. Interacts with YIF1B. Interacts with GPR39 and GALR1.

The protein resides in the cell membrane. Its subcellular location is the cell projection. It localises to the dendrite. G-protein coupled receptor activity is regulated by lipids: phosphatidylinositol 4-phosphate increases HTR1A-mediated activity. Its function is as follows. G-protein coupled receptor for 5-hydroxytryptamine (serotonin). Also functions as a receptor for various drugs and psychoactive substances. Ligand binding causes a conformation change that triggers signaling via guanine nucleotide-binding proteins (G proteins) and modulates the activity of downstream effectors, such as adenylate cyclase. HTR1A is coupled to G(i)/G(o) G alpha proteins and mediates inhibitory neurotransmission: signaling inhibits adenylate cyclase activity and activates a phosphatidylinositol-calcium second messenger system that regulates the release of Ca(2+) ions from intracellular stores. Beta-arrestin family members regulate signaling by mediating both receptor desensitization and resensitization processes. The sequence is that of 5-hydroxytryptamine receptor 1A (HTR1A) from Vulpes vulpes (Red fox).